A 337-amino-acid chain; its full sequence is Anthranilate phosphoribosyltransferase (337 aa).

5-phospho-alpha-D-ribose 1-diphosphate is bound by residues glycine 80, 83 to 84 (GD), threonine 88, 90 to 93 (NIST), 108 to 116 (KHGNRAVSS), and serine 120. Position 80 (glycine 80) interacts with anthranilate. Serine 92 serves as a coordination point for Mg(2+). Asparagine 111 provides a ligand contact to anthranilate. Residue arginine 166 participates in anthranilate binding. Aspartate 224 and glutamate 225 together coordinate Mg(2+).

Belongs to the anthranilate phosphoribosyltransferase family. Homodimer. Requires Mg(2+) as cofactor.

It catalyses the reaction N-(5-phospho-beta-D-ribosyl)anthranilate + diphosphate = 5-phospho-alpha-D-ribose 1-diphosphate + anthranilate. The protein operates within amino-acid biosynthesis; L-tryptophan biosynthesis; L-tryptophan from chorismate: step 2/5. In terms of biological role, catalyzes the transfer of the phosphoribosyl group of 5-phosphorylribose-1-pyrophosphate (PRPP) to anthranilate to yield N-(5'-phosphoribosyl)-anthranilate (PRA). This Anaeromyxobacter dehalogenans (strain 2CP-C) protein is Anthranilate phosphoribosyltransferase.